The following is a 234-amino-acid chain: Ubiquinone biosynthesis O-methyltransferase (234 aa).

Residues arginine 40, glycine 59, aspartate 80, and methionine 123 each coordinate S-adenosyl-L-methionine.

It belongs to the methyltransferase superfamily. UbiG/COQ3 family.

It catalyses the reaction a 3-demethylubiquinol + S-adenosyl-L-methionine = a ubiquinol + S-adenosyl-L-homocysteine + H(+). The enzyme catalyses a 3-(all-trans-polyprenyl)benzene-1,2-diol + S-adenosyl-L-methionine = a 2-methoxy-6-(all-trans-polyprenyl)phenol + S-adenosyl-L-homocysteine + H(+). Its pathway is cofactor biosynthesis; ubiquinone biosynthesis. Functionally, O-methyltransferase that catalyzes the 2 O-methylation steps in the ubiquinone biosynthetic pathway. The chain is Ubiquinone biosynthesis O-methyltransferase from Coxiella burnetii (strain CbuG_Q212) (Coxiella burnetii (strain Q212)).